The sequence spans 724 residues: Phenylalanine ammonia-lyase (724 aa).

The Proton donor/acceptor role is filled by Tyr99. The 5-imidazolinone (Ala-Gly) cross-link spans 204–206 (ASG). Position 205 is a 2,3-didehydroalanine (Ser) (Ser205). (E)-cinnamate contacts are provided by Asn265, Gln355, Arg361, Asn391, Lys462, Glu490, and Asn493.

Belongs to the PAL/histidase family. Homotetramer. Contains an active site 4-methylidene-imidazol-5-one (MIO), which is formed autocatalytically by cyclization and dehydration of residues Ala-Ser-Gly.

The protein resides in the cytoplasm. It carries out the reaction L-phenylalanine = (E)-cinnamate + NH4(+). Its pathway is phenylpropanoid metabolism; trans-cinnamate biosynthesis; trans-cinnamate from L-phenylalanine: step 1/1. Its function is as follows. Catalyzes the non-oxidative deamination of L-phenylalanine to form trans-cinnamic acid and a free ammonium ion. Facilitates the commitment step in phenylpropanoid pathways that produce secondary metabolites such as lignins, coumarins and flavonoids. The chain is Phenylalanine ammonia-lyase from Flammulina velutipes (Agaricus velutipes).